The chain runs to 43 residues: KCSTKGYAKEGCRGIDKRYWNSQCRTTQSYVRALTMDNKKRIG.

The protein belongs to the NGF-beta family.

Its subcellular location is the secreted. Promotes the survival of neuronal populations that are all located either in the central nervous system or directly connected to it. The chain is Neurotrophic factor BDNF (BDNF) from Macrovipera lebetinus (Levantine viper).